Consider the following 97-residue polypeptide: uncharacterized protein (97 aa).

Functionally, may have a regulatory function. This is an uncharacterized protein from Synechocystis sp. (strain ATCC 27184 / PCC 6803 / Kazusa).